We begin with the raw amino-acid sequence, 2224 residues long: Myomegalin (2224 aa).

Coiled coils occupy residues 41–97 (REDV…RQQE), 162–205 (DQYS…LLEE), 236–318 (VSES…REML), and 350–682 (CSQL…ALRQ). The interval 206-236 (PASMEVQPVPKGLPTQQKPDLHETPTTQPPV) is disordered. Residues 219–236 (PTQQKPDLHETPTTQPPV) are compositionally biased toward polar residues. Residues 703 to 751 (GVTSIGPHHGEQTDQGSMQMPSRDDSTSLTAREEASIPRSTLGDSDTVA) form a disordered region. Thr-705 is modified (phosphothreonine). Residues 724 to 738 (SRDDSTSLTAREEAS) show a composition bias toward basic and acidic residues. Coiled coils occupy residues 745-822 (GDSD…QLVD), 856-886 (NKRQ…RQLY), and 949-986 (AQEM…AGFS). Disordered stretches follow at residues 1098–1128 (TGLP…SLPL), 1141–1161 (NKSQ…GSTK), and 1270–1298 (VSPP…DDSS). Polar residues predominate over residues 1112 to 1124 (ENTTTARPGSRPQ). Coiled-coil stretches lie at residues 1159-1187 (STKH…SEAT), 1295-1331 (DDSS…LSAT), and 1377-1401 (GLQA…LPKT). A compositionally biased stretch (basic and acidic residues) spans 1276–1298 (KPLENKPGKQEEFRAHGTPDDSS). The region spanning 1497–1588 (KDHKSEKEEA…DEKKPSPSHS (92 aa)) is the Olduvai domain. Disordered regions lie at residues 1576–1637 (THYD…SLSQ), 1736–1757 (SSGQ…LSSG), 1805–1824 (LSST…QGLE), and 1962–2001 (KASL…LNSP). A compositionally biased stretch (polar residues) spans 1599-1609 (ESSSSPISLPT). Residues 1748 to 1757 (GSVSGELSSG) are compositionally biased toward low complexity. The stretch at 1769–1958 (GADLLEEHLG…RLQLEQQMDR (190 aa)) forms a coiled coil. Residues 2148–2191 (KEGQLMEKELLDLRAQVSQQEQILQNTAARLKRANQRKKSMEQF) adopt a coiled-coil conformation.

As to quaternary structure, interacts with PDE4D. Isoform 2 interacts with MAPRE1 and MAPRE3. Isoform 2 forms a pericentrosomal complex with AKAP9, CDK5RAP2 and EB1/MAPRE1; within this complex, may mediate MAPRE1-binding to CDK5RAP2. Interaction with AKAP9 stabilizes both proteins. Isoform 2 interacts (via N-terminus) with CAMSAP2; this interaction is much stronger in the presence of AKAP9. In complex with AKAP9, Isoform 2 recruits CAMSAP2 to the Golgi apparatus. Isoform 2 interacts with unglycosylated LGALS3BP; this interaction may connect the pericentrosomal complex to the gamma-tubulin ring complex (gamma-TuRC) to promote microtubule assembly and acetylation.

It is found in the cytoplasm. Its subcellular location is the cytoskeleton. The protein localises to the microtubule organizing center. It localises to the centrosome. The protein resides in the golgi apparatus. In terms of biological role, functions as an anchor sequestering components of the cAMP-dependent pathway to Golgi and/or centrosomes. Functionally, participates in microtubule dynamics, promoting microtubule assembly. Depending upon the cell context, may act at the level of the Golgi apparatus or that of the centrosome. In complex with AKAP9, recruits CAMSAP2 to the Golgi apparatus and tethers non-centrosomal minus-end microtubules to the Golgi, an important step for polarized cell movement. In complex with AKAP9, EB1/MAPRE1 and CDK5RAP2, contributes to microtubules nucleation and extension from the centrosome to the cell periphery, a crucial process for directed cell migration, mitotic spindle orientation and cell-cycle progression. The chain is Myomegalin (Pde4dip) from Mus musculus (Mouse).